Reading from the N-terminus, the 3564-residue chain is CUB and sushi domain-containing protein 1 (3564 aa).

A signal peptide spans 1–29 (MTAWRKFKSLLLPLVLAVLCAGLLTAAKG). The Extracellular segment spans residues 30–3487 (QNCGGLVQGP…NHYQGTSSGS (3458 aa)). 10 disulfide bridges follow: Cys-32–Cys-58, Cys-145–Cys-185, Cys-171–Cys-202, Cys-208–Cys-234, Cys-349–Cys-389, Cys-375–Cys-406, Cys-411–Cys-437, Cys-527–Cys-567, Cys-553–Cys-580, and Cys-584–Cys-610. One can recognise a CUB 1 domain in the interval 32-140 (CGGLVQGPNG…QGFKAMYEVL (109 aa)). 2 N-linked (GlcNAc...) asparagine glycosylation sites follow: Asn-40 and Asn-57. The Sushi 1 domain maps to 143–204 (HTCGNPGEIL…WDFPAPFCRA (62 aa)). Residues 208–312 (CGGTLRGTSG…KGFNAQFQVK (105 aa)) enclose the CUB 2 domain. Residues 347 to 408 (DMCPDPGIPD…WNDHRPICRA (62 aa)) form the Sushi 2 domain. The region spanning 411–522 (CGSNLRGPSG…PGFKAVYQEI (112 aa)) is the CUB 3 domain. A Sushi 3 domain is found at 525 to 582 (GGCGDPGIPAYGKRTGSSFLHGDTLTFECQAAFELVGERVITCQKNNQWSGNKPSCVF). The CUB 4 domain occupies 584-692 (CFFNFTAPSG…RGFNITYTTF (109 aa)). Residues Asn-587 and Asn-686 are each glycosylated (N-linked (GlcNAc...) asparagine). The Sushi 4 domain occupies 695–756 (NECHDPGIPV…WSSTVPRCEA (62 aa)). 6 disulfides stabilise this stretch: Cys-697–Cys-738, Cys-723–Cys-754, Cys-758–Cys-784, Cys-873–Cys-913, Cys-899–Cys-926, and Cys-930–Cys-956. One can recognise a CUB 5 domain in the interval 758-866 (CGGHLTASSG…VGFLIHYESV (109 aa)). A Sushi 5 domain is found at 871-928 (DSCLDPGIPVNGQRHGSNFGIRSTVTFSCDPGYTLSDDEPLVCEKNHQWNHALPSCDA). A CUB 6 domain is found at 930–1040 (CGGYIHGKSG…EGFNITFAEY (111 aa)). 3 N-linked (GlcNAc...) asparagine glycosylation sites follow: Asn-955, Asn-1015, and Asn-1034. The region spanning 1043–1102 (EPCDDPGVPAFSRRIGFQFGVGDTLAFTCFQGYRLEGATKLTCLGGGRRVWSAPLPRCVA) is the Sushi 6 domain. Cystine bridges form between Cys-1045/Cys-1085, Cys-1071/Cys-1100, and Cys-1104/Cys-1130. Positions 1104 to 1212 (CGASVKGNEG…QGFQLTYTSF (109 aa)) constitute a CUB 7 domain. N-linked (GlcNAc...) asparagine glycans are attached at residues Asn-1184 and Asn-1197. Residues 1215 to 1275 (VKCEDPGIPN…WDKPMPSCVA (61 aa)) form the Sushi 7 domain. 12 disulfide bridges follow: Cys-1217/Cys-1258, Cys-1244/Cys-1273, Cys-1277/Cys-1304, Cys-1391/Cys-1431, Cys-1417/Cys-1447, Cys-1451/Cys-1477, Cys-1564/Cys-1604, Cys-1590/Cys-1621, Cys-1625/Cys-1651, Cys-1741/Cys-1781, Cys-1767/Cys-1798, and Cys-1802/Cys-1828. Residues 1277–1386 (CGGLVHAATS…SGFSIQFSTS (110 aa)) enclose the CUB 8 domain. Residues 1389-1449 (STCNDPGMPQ…WQPDPPSCIA (61 aa)) enclose the Sushi 8 domain. Asn-1399 carries an N-linked (GlcNAc...) asparagine glycan. The 109-residue stretch at 1451-1559 (CGGNLTGPAG…SGFAIEFKEK (109 aa)) folds into the CUB 9 domain. Asn-1454 and Asn-1572 each carry an N-linked (GlcNAc...) asparagine glycan. A Sushi 9 domain is found at 1562–1623 (EACFDPGNIM…WDRALPACQA (62 aa)). The 109-residue stretch at 1625–1733 (CGGQYTGSEG…RGFHFVYQAV (109 aa)) folds into the CUB 10 domain. The N-linked (GlcNAc...) asparagine glycan is linked to Asn-1644. One can recognise a Sushi 10 domain in the interval 1739-1800 (TQCSSVPEPR…WNDTIPSCVV (62 aa)). Asn-1792, Asn-1805, and Asn-1882 each carry an N-linked (GlcNAc...) asparagine glycan. The CUB 11 domain maps to 1802-1910 (CSGNFTQRRG…AGFHLEYKTV (109 aa)). In terms of domain architecture, Sushi 11 spans 1913 to 1972 (AACQEPALPSNGIKIGDRYMVNDVLSFQCEPGYTLQGRSHISCMPGTVRRWNYPSPLCIA). 3 cysteine pairs are disulfide-bonded: Cys-1915–Cys-1955, Cys-1941–Cys-1970, and Cys-1974–Cys-2000. The region spanning 1974–2082 (CGGTLTSMSG…QGFKLSYQAY (109 aa)) is the CUB 12 domain. Asn-2018 carries an N-linked (GlcNAc...) asparagine glycan. Residues 2085–2144 (QNCPDPPAFQNGFMINSDYSVGQSISFECYPGYILLGHPVLTCQHGTDRNWNYPFPRCDA) enclose the Sushi 12 domain. 3 disulfide bridges follow: Cys-2087–Cys-2127, Cys-2113–Cys-2142, and Cys-2146–Cys-2172. A CUB 13 domain is found at 2146-2257 (CGYNVTSQNG…LNFHAFQLKR (112 aa)). Asn-2149, Asn-2154, and Asn-2187 each carry an N-linked (GlcNAc...) asparagine glycan. One can recognise a Sushi 13 domain in the interval 2256-2317 (KRCPPPPAVP…FQGSPPTCEA (62 aa)). 3 disulfide bridges follow: Cys-2258-Cys-2300, Cys-2286-Cys-2315, and Cys-2319-Cys-2347. A CUB 14 domain is found at 2319–2430 (CPANEVRTES…KGFKIRYAAP (112 aa)). N-linked (GlcNAc...) asparagine glycans are attached at residues Asn-2358, Asn-2394, Asn-2400, Asn-2445, Asn-2470, and Asn-2503. Sushi domains lie at 2430–2492 (PYCS…LCQA), 2493–2554 (VSCG…TCKP), 2555–2619 (VPCP…RCKV), 2620–2677 (ISCG…RCLA), 2678–2735 (GHCG…VCVP), 2736–2793 (ITCG…ICRV), 2794–2856 (VNCS…KCLA), 2857–2914 (ISCG…HCSG), 2918–2975 (GFCG…VCEA), 2976–3034 (VSCG…DCTI), 3035–3094 (ISCG…LCKA), 3095–3152 (VLCN…QCLP), 3153–3210 (VFCG…TCID), 3214–3272 (TACP…ECIP), and 3273–3332 (HACR…VCKS). 12 disulfides stabilise this stretch: Cys-2432-Cys-2473, Cys-2459-Cys-2490, Cys-2495-Cys-2537, Cys-2521-Cys-2552, Cys-2557-Cys-2602, Cys-2588-Cys-2617, Cys-2622-Cys-2662, Cys-2648-Cys-2675, Cys-2680-Cys-2720, Cys-2706-Cys-2733, Cys-2738-Cys-2778, and Cys-2764-Cys-2791. Asn-2605 carries N-linked (GlcNAc...) asparagine glycosylation. Residues Asn-2750 and Asn-2761 are each glycosylated (N-linked (GlcNAc...) asparagine). An N-linked (GlcNAc...) asparagine glycan is attached at Asn-2795. Intrachain disulfides connect Cys-2796–Cys-2841, Cys-2827–Cys-2854, Cys-2859–Cys-2899, Cys-2885–Cys-2912, Cys-2920–Cys-2960, Cys-2946–Cys-2973, Cys-2978–Cys-3019, Cys-3005–Cys-3032, Cys-3037–Cys-3079, Cys-3063–Cys-3092, Cys-3097–Cys-3137, Cys-3123–Cys-3150, Cys-3155–Cys-3195, Cys-3181–Cys-3208, Cys-3216–Cys-3257, Cys-3243–Cys-3270, Cys-3275–Cys-3317, and Cys-3302–Cys-3330. An N-linked (GlcNAc...) asparagine glycan is attached at Asn-2894. An N-linked (GlcNAc...) asparagine glycan is attached at Asn-2963. 3 N-linked (GlcNAc...) asparagine glycosylation sites follow: Asn-3022, Asn-3056, and Asn-3086. 2 N-linked (GlcNAc...) asparagine glycosylation sites follow: Asn-3228 and Asn-3260. N-linked (GlcNAc...) asparagine glycosylation is found at Asn-3339, Asn-3379, and Asn-3386. Residues 3488 to 3508 (VAAAILVPFFALILSGFAFYL) traverse the membrane as a helical segment. Over 3509 to 3564 (YKHRTRPKVQYNGYAGHENSNGQASFENPMYDTNLKPTEAKAVRFDTTLNTVCTVV) the chain is Cytoplasmic.

It belongs to the CSMD family.

It localises to the membrane. The sequence is that of CUB and sushi domain-containing protein 1 (Csmd1) from Mus musculus (Mouse).